We begin with the raw amino-acid sequence, 524 residues long: Putative ribose/galactose/methyl galactoside import ATP-binding protein 1 (524 aa).

2 consecutive ABC transporter domains span residues 35–271 (LEVR…VGRE) and 281–520 (VPIG…RIMD). Residue 67 to 74 (GENGAGKS) participates in ATP binding.

Belongs to the ABC transporter superfamily. Carbohydrate importer 2 (CUT2) (TC 3.A.1.2) family.

It is found in the cell inner membrane. The enzyme catalyses D-ribose(out) + ATP + H2O = D-ribose(in) + ADP + phosphate + H(+). It catalyses the reaction D-galactose(out) + ATP + H2O = D-galactose(in) + ADP + phosphate + H(+). In terms of biological role, part of an ABC transporter complex involved in carbohydrate import. Could be involved in ribose, galactose and/or methyl galactoside import. Responsible for energy coupling to the transport system. In Burkholderia cenocepacia (strain HI2424), this protein is Putative ribose/galactose/methyl galactoside import ATP-binding protein 1.